Here is a 424-residue protein sequence, read N- to C-terminus: Ornithine aminotransferase (424 aa).

Lys272 is modified (N6-(pyridoxal phosphate)lysine). Residue Lys390 forms a Glycyl lysine isopeptide (Lys-Gly) (interchain with G-Cter in ubiquitin) linkage.

The protein belongs to the class-III pyridoxal-phosphate-dependent aminotransferase family. Pyridoxal 5'-phosphate serves as cofactor.

It localises to the cytoplasm. It catalyses the reaction a 2-oxocarboxylate + L-ornithine = L-glutamate 5-semialdehyde + an L-alpha-amino acid. It functions in the pathway amino-acid biosynthesis; L-proline biosynthesis; L-glutamate 5-semialdehyde from L-ornithine: step 1/1. With respect to regulation, by arginine and urea. Functionally, catalyzes the transamination of ornithine into L-glutamate gamma-semialdehyde, the second step of arginine degradation. This is Ornithine aminotransferase (CAR2) from Saccharomyces cerevisiae (strain ATCC 204508 / S288c) (Baker's yeast).